The sequence spans 357 residues: Enoyl-[acyl-carrier-protein] reductase, mitochondrial (357 aa).

Residues 1-19 (MLRRGFLSRINAAQWSRQM) constitute a mitochondrion transit peptide. Residues 36–352 (EVLQLVEDKL…FKGFTGKKYI (317 aa)) form the Enoyl reductase (ER) domain. Catalysis depends on Tyr74, which acts as the Proton donor. NADP(+)-binding positions include Asn147, 173 to 176 (NSAV), 196 to 198 (RDR), 264 to 267 (YGGM), 289 to 291 (FWM), Lys349, and Lys350.

It belongs to the zinc-containing alcohol dehydrogenase family. Quinone oxidoreductase subfamily. As to quaternary structure, homodimer. Expressed in the central nervous system.

It is found in the mitochondrion. It catalyses the reaction a 2,3-saturated acyl-[ACP] + NADP(+) = a (2E)-enoyl-[ACP] + NADPH + H(+). Catalyzes the NADPH-dependent reduction of trans-2-enoyl thioesters in mitochondrial fatty acid synthesis (fatty acid synthesis type II). Fatty acid chain elongation in mitochondria uses acyl carrier protein (ACP) as an acyl group carrier, but the enzyme accepts both ACP and CoA thioesters as substrates in vitro. Involved in iron homeostasis; affecting Fe-S cluster assembly and ceramide metabolism. Required for proper morphology and bioenergetic functions of mitochondria. Required for maintenance of neurons, including photoreceptor neurons. This chain is Enoyl-[acyl-carrier-protein] reductase, mitochondrial, found in Drosophila melanogaster (Fruit fly).